Here is a 1072-residue protein sequence, read N- to C-terminus: Carbamoyl phosphate synthase large chain (1072 aa).

The carboxyphosphate synthetic domain stretch occupies residues 1-401 (MPKRLDINTI…SLLKAVRSLE (401 aa)). 12 residues coordinate ATP: R129, R169, G175, G176, K208, I210, E215, G241, V242, H243, Q284, and E298. In terms of domain architecture, ATP-grasp 1 spans 133-327 (RTLMQDLNEP…IAKLAAKIAV (195 aa)). Residues Q284, E298, and N300 each contribute to the Mg(2+) site. Residues Q284, E298, and N300 each contribute to the Mn(2+) site. The segment at 402–546 (LGIYHLELDH…YSTYADENES (145 aa)) is oligomerization domain. The carbamoyl phosphate synthetic domain stretch occupies residues 547–929 (IVTDRKSVVV…ALYKGLVASG (383 aa)). An ATP-grasp 2 domain is found at 671 to 861 (EAALTKLGIP…MANVATKVIL (191 aa)). Positions 707, 746, 752, 777, 778, 779, 780, 820, and 832 each coordinate ATP. Positions 820, 832, and 834 each coordinate Mg(2+). Residues Q820, E832, and N834 each contribute to the Mn(2+) site. Positions 930 to 1072 (INIPTHGSVI…QTKRHEVVHA (143 aa)) constitute an MGS-like domain. Positions 930-1072 (INIPTHGSVI…QTKRHEVVHA (143 aa)) are allosteric domain.

This sequence belongs to the CarB family. Composed of two chains; the small (or glutamine) chain promotes the hydrolysis of glutamine to ammonia, which is used by the large (or ammonia) chain to synthesize carbamoyl phosphate. Tetramer of heterodimers (alpha,beta)4. It depends on Mg(2+) as a cofactor. Mn(2+) serves as cofactor.

The catalysed reaction is hydrogencarbonate + L-glutamine + 2 ATP + H2O = carbamoyl phosphate + L-glutamate + 2 ADP + phosphate + 2 H(+). The enzyme catalyses hydrogencarbonate + NH4(+) + 2 ATP = carbamoyl phosphate + 2 ADP + phosphate + 2 H(+). It participates in amino-acid biosynthesis; L-arginine biosynthesis; carbamoyl phosphate from bicarbonate: step 1/1. The protein operates within pyrimidine metabolism; UMP biosynthesis via de novo pathway; (S)-dihydroorotate from bicarbonate: step 1/3. Functionally, large subunit of the glutamine-dependent carbamoyl phosphate synthetase (CPSase). CPSase catalyzes the formation of carbamoyl phosphate from the ammonia moiety of glutamine, carbonate, and phosphate donated by ATP, constituting the first step of 2 biosynthetic pathways, one leading to arginine and/or urea and the other to pyrimidine nucleotides. The large subunit (synthetase) binds the substrates ammonia (free or transferred from glutamine from the small subunit), hydrogencarbonate and ATP and carries out an ATP-coupled ligase reaction, activating hydrogencarbonate by forming carboxy phosphate which reacts with ammonia to form carbamoyl phosphate. This is Carbamoyl phosphate synthase large chain from Bacillus cereus (strain B4264).